The following is an 863-amino-acid chain: Alanine--tRNA ligase (863 aa).

Zn(2+) contacts are provided by histidine 552, histidine 556, cysteine 654, and histidine 658.

It belongs to the class-II aminoacyl-tRNA synthetase family. It depends on Zn(2+) as a cofactor.

The protein localises to the cytoplasm. It catalyses the reaction tRNA(Ala) + L-alanine + ATP = L-alanyl-tRNA(Ala) + AMP + diphosphate. Catalyzes the attachment of alanine to tRNA(Ala) in a two-step reaction: alanine is first activated by ATP to form Ala-AMP and then transferred to the acceptor end of tRNA(Ala). Also edits incorrectly charged Ser-tRNA(Ala) and Gly-tRNA(Ala) via its editing domain. The sequence is that of Alanine--tRNA ligase from Halorhodospira halophila (strain DSM 244 / SL1) (Ectothiorhodospira halophila (strain DSM 244 / SL1)).